Reading from the N-terminus, the 101-residue chain is Large ribosomal subunit protein uL24 (101 aa).

This sequence belongs to the universal ribosomal protein uL24 family. As to quaternary structure, part of the 50S ribosomal subunit.

In terms of biological role, one of two assembly initiator proteins, it binds directly to the 5'-end of the 23S rRNA, where it nucleates assembly of the 50S subunit. Its function is as follows. One of the proteins that surrounds the polypeptide exit tunnel on the outside of the subunit. This Lactococcus lactis subsp. lactis (strain IL1403) (Streptococcus lactis) protein is Large ribosomal subunit protein uL24.